The chain runs to 353 residues: ATP-dependent kinase YFH7 (353 aa).

31–39 (GPPGSGKST) provides a ligand contact to ATP.

The protein belongs to the YFH7 family.

In terms of biological role, ATP-dependent kinase that could be involved in endoplasmic reticulum membrane assembly. This Kluyveromyces lactis (strain ATCC 8585 / CBS 2359 / DSM 70799 / NBRC 1267 / NRRL Y-1140 / WM37) (Yeast) protein is ATP-dependent kinase YFH7 (YFH7).